A 150-amino-acid chain; its full sequence is SPbeta prophage-derived uncharacterized protein YoqH (150 aa).

The first 23 residues, 1–23 (MKRFILVLSFLSIIVAYPIQTNA), serve as a signal peptide directing secretion.

The protein is SPbeta prophage-derived uncharacterized protein YoqH (yoqH) of Bacillus subtilis (strain 168).